The sequence spans 500 residues: NAD(P)H-quinone oxidoreductase chain 4, chloroplastic (500 aa).

15 helical membrane passes run 4 to 24 (FPWLTTVVVFPIFAGLLLFFF), 37 to 57 (ICICVLELLLTTYAFCYHFEL), 87 to 107 (IGPILLTGFITTLATLAAWPV), 113 to 130 (LFYFLMLAMYSGQIGSFS), 134 to 154 (LLLFFIMWEFELIPVYLLLSM), 167 to 187 (FILYTAGGSIFLLMGVLGIGL), 207 to 227 (IALEILFYIGFLIAFAVKSPI), 242 to 262 (HYSTCMLLAGILLKMGAYGLV), 272 to 292 (AHSIFSPWLIIVGIIQIIYAA), 305 to 325 (IAYSSVSHMGFIIIGIGSISD), 330 to 350 (GAILQIISHGFIGAALFFLAG), 364 to 384 (MGGLAIPIPKIFTTFSILSMA), 386 to 406 (LALPGMSGFVAELIVFFGIIT), 417 to 437 (VITLVMAIGIILTPIYLLSML), and 463 to 483 (FVAISILIPVIGIGIYPDFVF).

Belongs to the complex I subunit 4 family.

The protein localises to the plastid. The protein resides in the chloroplast thylakoid membrane. It carries out the reaction a plastoquinone + NADH + (n+1) H(+)(in) = a plastoquinol + NAD(+) + n H(+)(out). The enzyme catalyses a plastoquinone + NADPH + (n+1) H(+)(in) = a plastoquinol + NADP(+) + n H(+)(out). The protein is NAD(P)H-quinone oxidoreductase chain 4, chloroplastic of Cucumis sativus (Cucumber).